The chain runs to 245 residues: Histone deacetylase HDT1 (245 aa).

An N-acetylmethionine modification is found at Met-1. Required to repress transcription regions lie at residues 2 to 5 and 101 to 162; these read EFWG and GYSE…EEEE. The tract at residues 99 to 245 is disordered; that stretch reads PQGYSEEEEE…HNKAKHAAAK (147 aa). Residues 103–113 are compositionally biased toward acidic residues; that stretch reads SEEEEEEEEEV. Residues 114-124 show a composition bias toward low complexity; the sequence is PAGNAAKAVAK. The span at 137–162 shows a compositional bias: acidic residues; the sequence is DDEEDESDSDGMDEDDSDGEDSEEEE. The span at 178 to 195 shows a compositional bias: low complexity; that stretch reads TTPKAPVSAKKAKVAVTP. Over residues 208–234 the composition is skewed to polar residues; that stretch reads ANQSPKSASQVSCGSCKKTFNSGNALE. Ser-211 carries the post-translational modification Phosphoserine. The C2H2-type zinc-finger motif lies at 218–241; that stretch reads VSCGSCKKTFNSGNALESHNKAKH.

It belongs to the histone deacetylase HD2 family. In terms of assembly, interacts with DNMT2. Interacts with DEK3. Expressed in leaves, roots, stems, young plantlets, flowers and siliques. Highest levels in ovules, embryos, shoot apical meristems and first leaves. Also expressed in somatic embryos.

Its subcellular location is the nucleus. The protein localises to the nucleolus. Functionally, probably mediates the deacetylation of lysine residues on the N-terminal part of the core histones (H2A, H2B, H3 and H4). Histone deacetylation gives a tag for epigenetic repression and plays an important role in transcriptional regulation, cell cycle progression and developmental events. Required for histone H3 'Lys-9' deacetylation. Involved in rRNA gene silencing in nucleolar dominance. Seems to be implicated in the regulation of genes involved in seeds development. This Arabidopsis thaliana (Mouse-ear cress) protein is Histone deacetylase HDT1.